The primary structure comprises 211 residues: Orotate phosphoribosyltransferase (211 aa).

5-phospho-alpha-D-ribose 1-diphosphate contacts are provided by residues Arg-103, Lys-107, His-109, and 129-137; that span reads EDLISTGKS. Ser-133 contributes to the orotate binding site.

This sequence belongs to the purine/pyrimidine phosphoribosyltransferase family. PyrE subfamily. In terms of assembly, homodimer. Requires Mg(2+) as cofactor.

The enzyme catalyses orotidine 5'-phosphate + diphosphate = orotate + 5-phospho-alpha-D-ribose 1-diphosphate. Its pathway is pyrimidine metabolism; UMP biosynthesis via de novo pathway; UMP from orotate: step 1/2. Functionally, catalyzes the transfer of a ribosyl phosphate group from 5-phosphoribose 1-diphosphate to orotate, leading to the formation of orotidine monophosphate (OMP). In Fusobacterium nucleatum subsp. nucleatum (strain ATCC 25586 / DSM 15643 / BCRC 10681 / CIP 101130 / JCM 8532 / KCTC 2640 / LMG 13131 / VPI 4355), this protein is Orotate phosphoribosyltransferase.